Reading from the N-terminus, the 352-residue chain is MGKVVVGLSGGVDSSVAAAALHAQGYDVIGLTLWLMKGKGQCCSEGMVDAAFICEQLGVPHHIVDSRELFQKEIIDYLVSGYEAGITPLPCSQCNKAVKFSPMLHYARETLQTDTIATGHYARIRFSPENNRYQLLRAVDQNKDQSYFLYDLTQDVLRGTLFPLGEQTKAETRRIAQEFGLKTADKPDSQDLCLIEAHGTMRSFLDKYIAVSEGDIVDLDGKVLGKHSGIHHYTIGQRKGIGIAAAEPLYVVKLDPVMNRVIVGNRESAVSAACLVGRMNWVSIAEPTTPIRAQVQVRYRSPAVPVNVIPLENNQVKLVFDQPQFSITPGQAAVIYEGEIVLGGGIISGATP.

ATP contacts are provided by residues 7-14 (GLSGGVDS) and leucine 33. Catalysis depends on cysteine 94, which acts as the Nucleophile. Cysteine 94 and cysteine 193 form a disulfide bridge. Glycine 119 is an ATP binding site. The tract at residues 143–145 (KDQ) is interaction with tRNA. The active-site Cysteine persulfide intermediate is cysteine 193. The segment at 298 to 299 (RY) is interaction with tRNA.

Belongs to the MnmA/TRMU family.

It localises to the cytoplasm. The catalysed reaction is S-sulfanyl-L-cysteinyl-[protein] + uridine(34) in tRNA + AH2 + ATP = 2-thiouridine(34) in tRNA + L-cysteinyl-[protein] + A + AMP + diphosphate + H(+). Functionally, catalyzes the 2-thiolation of uridine at the wobble position (U34) of tRNA, leading to the formation of s(2)U34. The polypeptide is tRNA-specific 2-thiouridylase MnmA (Microcystis aeruginosa (strain NIES-843 / IAM M-2473)).